The sequence spans 156 residues: Transcription elongation factor GreA (156 aa).

Positions 2–27 (EKTFPMTKEGLDKLKAELENLKLVKR) form a coiled coil.

The protein belongs to the GreA/GreB family.

Necessary for efficient RNA polymerase transcription elongation past template-encoded arresting sites. The arresting sites in DNA have the property of trapping a certain fraction of elongating RNA polymerases that pass through, resulting in locked ternary complexes. Cleavage of the nascent transcript by cleavage factors such as GreA or GreB allows the resumption of elongation from the new 3'terminus. GreA releases sequences of 2 to 3 nucleotides. The protein is Transcription elongation factor GreA of Lactococcus lactis subsp. cremoris (strain MG1363).